The following is a 471-amino-acid chain: Mixed lineage kinase domain-like protein (471 aa).

Residues 1–149 (MENLKHIITL…DADEDRRAFQ (149 aa)) form an N-terminal bundle and brace (NBB); mediates INSP6 binding region. Residues 55 to 84 (SEKLTTAMNRFKAALEEANGEIEKFSNRSN) are a coiled coil. Ser125 bears the Phosphoserine mark. Positions 139-180 (QDADEDRRAFQMLRRDNEKIEASLRRLEINMKEIKETLRQYL) form a coiled coil. Positions 194–469 (KEIKKEQLSG…DEILKKLSTF (276 aa)) constitute a Protein kinase domain. ATP-binding positions include 209 to 217 (LRENEVSTL) and Lys230. Residue Thr357 is modified to Phosphothreonine; by RIPK3. Residues Ser358 and Ser360 each carry the phosphoserine; by RIPK3 modification.

The protein belongs to the protein kinase superfamily. Homooligomer. Homotrimer; forms homotrimers on necroptosis induction. Upon TNF-induced necrosis, forms in complex with PGAM5, RIPK1 and RIPK3. Within this complex, may play a role in the proper targeting of RIPK1-RIPK3 to its downstream effector PGAM5. Interacts with RIPK3; the interaction is direct and promotes its phosphorylation and subsequent activation. Phosphorylation by RIPK3 induces a conformational switch that is required for necroptosis. It also induces homotrimerization and localization to the plasma membrane.

It is found in the cytoplasm. Its subcellular location is the cell membrane. The protein resides in the nucleus. With respect to regulation, activated via binding to highly phosphorylated inositol phosphates such as inositolhexakisphosphate (InsP6) which mediates the release of an N-terminal auto-inhibitory region. Activation requires not only RIPK3-dependent phosphorylation but also binding to highly phosphorylated inositol phosphates. Inhibited by necrosulfonamide, a specific inhibitor of necroptosis that targets Cys-86. Pseudokinase that plays a key role in TNF-induced necroptosis, a programmed cell death process. Does not have protein kinase activity. Activated following phosphorylation by RIPK3, leading to homotrimerization, localization to the plasma membrane and execution of programmed necrosis characterized by calcium influx and plasma membrane damage. In addition to TNF-induced necroptosis, necroptosis can also take place in the nucleus in response to orthomyxoviruses infection: following activation by ZBP1, MLKL is phosphorylated by RIPK3 in the nucleus, triggering disruption of the nuclear envelope and leakage of cellular DNA into the cytosol.following ZBP1 activation, which senses double-stranded Z-RNA structures, nuclear RIPK3 catalyzes phosphorylation and activation of MLKL, promoting disruption of the nuclear envelope and leakage of cellular DNA into the cytosol. Binds to highly phosphorylated inositol phosphates such as inositolhexakisphosphate (InsP6) which is essential for its necroptotic function. The sequence is that of Mixed lineage kinase domain-like protein from Homo sapiens (Human).